We begin with the raw amino-acid sequence, 240 residues long: Diglucosylglycerate octanoyltransferase (240 aa).

Belongs to the OctT acyltransferase family. Homotetramer.

The catalysed reaction is (2R)-2-O-[alpha-D-glucopyranosyl-(1-&gt;6)-alpha-D-glucopyranosyl]-glycerate + octanoyl-CoA = (2R)-2-O-[6-O-octanoyl-alpha-D-glucopyranosyl-(1-&gt;6)-alpha-D-glucopyranosyl]-glycerate + CoA. Sugar octanoyltransferase likely involved in the biosynthesis of mycobacterial methylglucose lipopolysaccharide (MGLP). Catalyzes the transfer of an octanoyl group from octanoyl-CoA to the C6 OH of the second glucose in diglucosylglycerate (DGG). Can also use hexanoyl-CoA as acyl donor in vitro. DGG is the preferred acceptor, but to a lesser extent, GG (glucosylglycerate) can be used as substrate. DGG and GG are the two earliest intermediates in MGLP biosynthesis. The sequence is that of Diglucosylglycerate octanoyltransferase from Mycolicibacterium hassiacum (strain DSM 44199 / CIP 105218 / JCM 12690 / 3849) (Mycobacterium hassiacum).